A 216-amino-acid polypeptide reads, in one-letter code: Large ribosomal subunit protein uL1 (216 aa).

The protein belongs to the universal ribosomal protein uL1 family. Part of the 50S ribosomal subunit.

In terms of biological role, binds directly to 23S rRNA. Probably involved in E site tRNA release. Protein L1 is also a translational repressor protein, it controls the translation of its operon by binding to its mRNA. The polypeptide is Large ribosomal subunit protein uL1 (Thermococcus kodakarensis (strain ATCC BAA-918 / JCM 12380 / KOD1) (Pyrococcus kodakaraensis (strain KOD1))).